The following is a 127-amino-acid chain: uncharacterized protein (127 aa).

A signal peptide spans 1-16; sequence MIKKIIFGIAILLSLS. Cysteine 17 carries N-palmitoyl cysteine lipidation. Cysteine 17 carries the S-diacylglycerol cysteine lipid modification. Residues 56–101 adopt a coiled-coil conformation; sequence EVRKEIQEYRVEIVDINKKKRELYNSLSKEAQNFLAEQQKYKQKLS. The segment at 101–127 is disordered; it reads SISKLPTEDDSPNNTANSKDNKDTDTK.

It is found in the cell membrane. This is an uncharacterized protein from Rickettsia felis (strain ATCC VR-1525 / URRWXCal2) (Rickettsia azadi).